Consider the following 271-residue polypeptide: MASTANPMQVMKKKLEGKVVIVTGGASGIGQTAARVFAQHGARAVVIADIQSEVGKSVAKSIGDPCCYVQCDVSDEEEVKSMIEWTASAYGGLDMMFSNVGIMSKSAQTVMDLDLLEFDKVMRVNARGMAACLKHAARKMVELGTRGTIICTTTPLSSRGGQSMTDYAMSKHAVMGLVRSASIQLGAHGIRVNCVTPSVVLTPLAQRMGLATPDDFHTHFGNFTSLKGVYLTPEQVAEAVVYLASDDAAFITGHDLVLDGGLLCLPFFAPS.

Residues 24-30, 49-51, 72-73, and Asn99 contribute to the NAD(+) site; these read GGASGIG, DIQ, and DV. 2 residues coordinate substrate: Thr154 and Tyr167. NAD(+) contacts are provided by residues Tyr167, Lys171, and 200–205; that span reads VLTPLA. Tyr167 functions as the Proton acceptor in the catalytic mechanism.

It belongs to the short-chain dehydrogenases/reductases (SDR) family.

It carries out the reaction (S)-8-oxocitronellyl enol = cis-trans-nepetalactol. The enzyme catalyses cis-cis-nepetalactol + NAD(+) = cis-cis-nepetalactone + NADH + H(+). It catalyses the reaction cis-trans-nepetalactol + NAD(+) = cis-trans-nepetalactone + NADH + H(+). Bifunctional enzyme that possesses cyclase and dehydrogenase activities. Functions as a non-oxidoreductive cyclase to promote the formation of cis-trans-nepetalactol. Functions as dehydrogenase to oxidize cis-cis-nepetalactol and cis-trans-nepetalactol into nepetalactones, metabolites that are both insect-repellent and have euphoric effect in cats. Binds NAD(+) as classical short-chain dehydrogenase/reductase (SDR), but does not utilize it for its redox-neutral cyclase activity. The polypeptide is (+)-cis,trans-nepetalactol synthase NEPS1 (Nepeta racemosa (Catmint)).